Reading from the N-terminus, the 223-residue chain is FAD-dependent monooxygenase imqC (223 aa).

Residues 139–141 (RFY), Y189, and D210 each bind FAD.

Belongs to the PheA/TfdB FAD monooxygenase family.

The protein operates within secondary metabolite biosynthesis. FAD-dependent monooxygenase; part of the gene cluster that mediates the biosynthesis of imizoquins A to D, tripeptide-derived alkaloids that serve a protective role against oxidative stress that are essential for normal germination. ImqB is a canonical three-module NRPS that assembles the tripeptide backbone of the imizoquins via condensation of Trp, Tyr, and Leu-derived precursors. N-methylation by imqF and phenol oxidation by imqC, followed by cyclization via the FAD-dependent oxidase imqH carry out the three-step transformation of L-tyrosine into tetrahydroisoquinoline. Importantly, this sequence requires the presence of a free amine in the tyrosine moiety, indicating that isoquinoline formation occurs prior to peptide bond formation. The imidazolidin-4-one ring of imizoquins could form following additional oxidation of the methyl-derived bridgehead carbon by imqH. Lastly, O-methylation by imqG and leucine hydroxylation by imqE complete biosynthesis of the imizoquins. This is FAD-dependent monooxygenase imqC from Aspergillus flavus (strain ATCC 200026 / FGSC A1120 / IAM 13836 / NRRL 3357 / JCM 12722 / SRRC 167).